Reading from the N-terminus, the 127-residue chain is Large ribosomal subunit protein bL20 (127 aa).

Belongs to the bacterial ribosomal protein bL20 family.

Binds directly to 23S ribosomal RNA and is necessary for the in vitro assembly process of the 50S ribosomal subunit. It is not involved in the protein synthesizing functions of that subunit. This chain is Large ribosomal subunit protein bL20, found in Streptomyces griseus subsp. griseus (strain JCM 4626 / CBS 651.72 / NBRC 13350 / KCC S-0626 / ISP 5235).